Reading from the N-terminus, the 90-residue chain is PqqA binding protein 2 (90 aa).

It belongs to the PqqD family. Monomer. Interacts with PqqE.

It functions in the pathway cofactor biosynthesis; pyrroloquinoline quinone biosynthesis. In terms of biological role, functions as a PqqA binding protein and presents PqqA to PqqE, in the pyrroloquinoline quinone (PQQ) biosynthetic pathway. This Pseudomonas putida (strain ATCC 47054 / DSM 6125 / CFBP 8728 / NCIMB 11950 / KT2440) protein is PqqA binding protein 2 (pqqD2).